The sequence spans 89 residues: Phosphocarrier protein HPr (89 aa).

Residues M1–D88 enclose the HPr domain. H15 serves as the catalytic Pros-phosphohistidine intermediate. A Phosphoserine; by HPrK/P modification is found at S46.

Belongs to the HPr family.

It is found in the cytoplasm. With respect to regulation, phosphorylation on Ser-46 inhibits the phosphoryl transfer from enzyme I to HPr. Functionally, general (non sugar-specific) component of the phosphoenolpyruvate-dependent sugar phosphotransferase system (sugar PTS). This major carbohydrate active-transport system catalyzes the phosphorylation of incoming sugar substrates concomitantly with their translocation across the cell membrane. The phosphoryl group from phosphoenolpyruvate (PEP) is transferred to the phosphoryl carrier protein HPr by enzyme I. Phospho-HPr then transfers it to the PTS EIIA domain. This is Phosphocarrier protein HPr (ptsH) from Xylella fastidiosa (strain Temecula1 / ATCC 700964).